We begin with the raw amino-acid sequence, 219 residues long: 23.6 kDa heat shock protein, mitochondrial (219 aa).

The N-terminal 29 residues, 1-29, are a transit peptide targeting the mitochondrion; the sequence is MALARQCLSKRLAAGCALARPLHAASPVA. The region spanning 104–219 is the sHSP domain; sequence QVAETLTRPL…KRSVTEVKVR (116 aa).

The protein belongs to the small heat shock protein (HSP20) family. May form oligomeric structures.

The protein localises to the mitochondrion. The sequence is that of 23.6 kDa heat shock protein, mitochondrial (HSP23.6) from Oryza sativa subsp. japonica (Rice).